The sequence spans 359 residues: DNA replication and repair protein RecF (359 aa).

Residue 30–37 (GQNAQGKT) coordinates ATP.

Belongs to the RecF family.

The protein localises to the cytoplasm. Its function is as follows. The RecF protein is involved in DNA metabolism; it is required for DNA replication and normal SOS inducibility. RecF binds preferentially to single-stranded, linear DNA. It also seems to bind ATP. This chain is DNA replication and repair protein RecF, found in Lactococcus lactis subsp. cremoris (strain MG1363).